The following is an 89-amino-acid chain: RNA-binding protein Hfq (89 aa).

In terms of domain architecture, Sm spans 9-68 (DPFLNALRRERVPVSIYLVNGIKLQGQVESFDQFVILLKNTVSQMVYKHAISTVVPARAL).

This sequence belongs to the Hfq family. As to quaternary structure, homohexamer.

Its function is as follows. RNA chaperone that binds small regulatory RNA (sRNAs) and mRNAs to facilitate mRNA translational regulation in response to envelope stress, environmental stress and changes in metabolite concentrations. Also binds with high specificity to tRNAs. This is RNA-binding protein Hfq from Shewanella denitrificans (strain OS217 / ATCC BAA-1090 / DSM 15013).